Reading from the N-terminus, the 168-residue chain is Ribosome maturation factor RimM (168 aa).

A PRC barrel domain is found at 96 to 168 (EGDYYWTDLI…IIVVEWDADF (73 aa)).

Belongs to the RimM family. As to quaternary structure, binds ribosomal protein uS19.

The protein localises to the cytoplasm. Its function is as follows. An accessory protein needed during the final step in the assembly of 30S ribosomal subunit, possibly for assembly of the head region. Essential for efficient processing of 16S rRNA. May be needed both before and after RbfA during the maturation of 16S rRNA. It has affinity for free ribosomal 30S subunits but not for 70S ribosomes. The protein is Ribosome maturation factor RimM of Coxiella burnetii (strain RSA 331 / Henzerling II).